We begin with the raw amino-acid sequence, 146 residues long: Putative type II restriction enzyme MjaORF1200P (146 aa).

To A.pernix APE2001.

It carries out the reaction Endonucleolytic cleavage of DNA to give specific double-stranded fragments with terminal 5'-phosphates.. In terms of biological role, a putative type II restriction enzyme, its methylase would be M.MjaORF1200P (AC Q58600). The sequence is that of Putative type II restriction enzyme MjaORF1200P from Methanocaldococcus jannaschii (strain ATCC 43067 / DSM 2661 / JAL-1 / JCM 10045 / NBRC 100440) (Methanococcus jannaschii).